We begin with the raw amino-acid sequence, 360 residues long: Phosphoserine aminotransferase (360 aa).

R42 serves as a coordination point for L-glutamate. 4 residues coordinate pyridoxal 5'-phosphate: W102, T152, D171, and Q194. K195 is modified (N6-(pyridoxal phosphate)lysine). 237 to 238 contacts pyridoxal 5'-phosphate; the sequence is NT.

Belongs to the class-V pyridoxal-phosphate-dependent aminotransferase family. SerC subfamily. Homodimer. Requires pyridoxal 5'-phosphate as cofactor.

It is found in the cytoplasm. It carries out the reaction O-phospho-L-serine + 2-oxoglutarate = 3-phosphooxypyruvate + L-glutamate. It catalyses the reaction 4-(phosphooxy)-L-threonine + 2-oxoglutarate = (R)-3-hydroxy-2-oxo-4-phosphooxybutanoate + L-glutamate. It functions in the pathway amino-acid biosynthesis; L-serine biosynthesis; L-serine from 3-phospho-D-glycerate: step 2/3. Its pathway is cofactor biosynthesis; pyridoxine 5'-phosphate biosynthesis; pyridoxine 5'-phosphate from D-erythrose 4-phosphate: step 3/5. In terms of biological role, catalyzes the reversible conversion of 3-phosphohydroxypyruvate to phosphoserine and of 3-hydroxy-2-oxo-4-phosphonooxybutanoate to phosphohydroxythreonine. This Coxiella burnetii (strain CbuG_Q212) (Coxiella burnetii (strain Q212)) protein is Phosphoserine aminotransferase.